The sequence spans 144 residues: Large ribosomal subunit protein uL11 (144 aa).

It belongs to the universal ribosomal protein uL11 family. Part of the ribosomal stalk of the 50S ribosomal subunit. Interacts with L10 and the large rRNA to form the base of the stalk. L10 forms an elongated spine to which L12 dimers bind in a sequential fashion forming a multimeric L10(L12)X complex. One or more lysine residues are methylated.

Its function is as follows. Forms part of the ribosomal stalk which helps the ribosome interact with GTP-bound translation factors. The sequence is that of Large ribosomal subunit protein uL11 from Frankia alni (strain DSM 45986 / CECT 9034 / ACN14a).